We begin with the raw amino-acid sequence, 418 residues long: Deubiquitinase and deneddylase Dub1 (418 aa).

Over residues 1–11 (MLSPTNSTSKT) the composition is skewed to polar residues. Residues 1 to 23 (MLSPTNSTSKTAPVPPQDSSKPV) are disordered. Residues 40-60 (TALVVLLVVVTLGLILLFYSF) traverse the membrane as a helical segment. The tract at residues 72-145 (TRPSTKEQPT…LPPKAPKPVK (74 aa)) is disordered. Positions 86 to 141 (VPLPSPPLAVPRPSTPPPPVISRPSMPPAPTPAISPPSTPSAPKPSTPPPLPPKAP) are enriched in pro residues. Active-site residues include H288, D305, and C358.

Belongs to the peptidase C48 family.

Its subcellular location is the secreted. It localises to the host cell. The protein resides in the membrane. Functionally, effector proteins function to alter host cell physiology and promote bacterial survival in host tissues. This protease possesses deubiquitinating and deneddylating activities. The chain is Deubiquitinase and deneddylase Dub1 (cdu1) from Chlamydia trachomatis serovar E (strain Sweden2).